A 157-amino-acid chain; its full sequence is 2-C-methyl-D-erythritol 2,4-cyclodiphosphate synthase (157 aa).

The a divalent metal cation site is built by Asp8 and His10. 4-CDP-2-C-methyl-D-erythritol 2-phosphate-binding positions include 8–10 (DVH) and 34–35 (HS). Position 42 (His42) interacts with a divalent metal cation. Residues 56 to 58 (DIG), 61 to 65 (FPDTD), 132 to 135 (TTTE), Phe139, and Arg142 each bind 4-CDP-2-C-methyl-D-erythritol 2-phosphate.

The protein belongs to the IspF family. Homotrimer. Requires a divalent metal cation as cofactor.

It carries out the reaction 4-CDP-2-C-methyl-D-erythritol 2-phosphate = 2-C-methyl-D-erythritol 2,4-cyclic diphosphate + CMP. It functions in the pathway isoprenoid biosynthesis; isopentenyl diphosphate biosynthesis via DXP pathway; isopentenyl diphosphate from 1-deoxy-D-xylulose 5-phosphate: step 4/6. Its function is as follows. Involved in the biosynthesis of isopentenyl diphosphate (IPP) and dimethylallyl diphosphate (DMAPP), two major building blocks of isoprenoid compounds. Catalyzes the conversion of 4-diphosphocytidyl-2-C-methyl-D-erythritol 2-phosphate (CDP-ME2P) to 2-C-methyl-D-erythritol 2,4-cyclodiphosphate (ME-CPP) with a corresponding release of cytidine 5-monophosphate (CMP). In Geotalea uraniireducens (strain Rf4) (Geobacter uraniireducens), this protein is 2-C-methyl-D-erythritol 2,4-cyclodiphosphate synthase.